A 415-amino-acid polypeptide reads, in one-letter code: ATP-dependent Clp protease ATP-binding subunit ClpX (415 aa).

A ClpX-type ZB domain is found at 1–52 (MAESKNNKKRCSFCGRSENEVGFLITGMNGYICDSCATQAYEITQEAMGAGK). 4 residues coordinate Zn(2+): Cys-11, Cys-14, Cys-33, and Cys-36. ATP is bound at residue 121–128 (STGTGKTL).

It belongs to the ClpX chaperone family. Component of the ClpX-ClpP complex. Forms a hexameric ring that, in the presence of ATP, binds to fourteen ClpP subunits assembled into a disk-like structure with a central cavity, resembling the structure of eukaryotic proteasomes.

In terms of biological role, ATP-dependent specificity component of the Clp protease. It directs the protease to specific substrates. Can perform chaperone functions in the absence of ClpP. This Bacteroides fragilis (strain ATCC 25285 / DSM 2151 / CCUG 4856 / JCM 11019 / LMG 10263 / NCTC 9343 / Onslow / VPI 2553 / EN-2) protein is ATP-dependent Clp protease ATP-binding subunit ClpX.